The following is a 487-amino-acid chain: Glutamate--tRNA ligase (487 aa).

The 'HIGH' region motif lies at 11–21; sequence PSPTGYPHLGN. Residues cysteine 108, cysteine 110, cysteine 135, and aspartate 137 each contribute to the Zn(2+) site. Positions 245–249 match the 'KMSKS' region motif; it reads KLSKR. Lysine 248 is an ATP binding site.

The protein belongs to the class-I aminoacyl-tRNA synthetase family. Glutamate--tRNA ligase type 1 subfamily. Monomer. Zn(2+) serves as cofactor.

It localises to the cytoplasm. It carries out the reaction tRNA(Glu) + L-glutamate + ATP = L-glutamyl-tRNA(Glu) + AMP + diphosphate. Catalyzes the attachment of glutamate to tRNA(Glu) in a two-step reaction: glutamate is first activated by ATP to form Glu-AMP and then transferred to the acceptor end of tRNA(Glu). This chain is Glutamate--tRNA ligase, found in Dehalococcoides mccartyi (strain CBDB1).